A 286-amino-acid chain; its full sequence is 3-methyl-2-oxobutanoate hydroxymethyltransferase (286 aa).

The Mg(2+) site is built by D67 and D106. 3-methyl-2-oxobutanoate contacts are provided by residues 67–68 (DS), D106, and K136. E138 lines the Mg(2+) pocket. The active-site Proton acceptor is E204.

It belongs to the PanB family. As to quaternary structure, homodecamer; pentamer of dimers. It depends on Mg(2+) as a cofactor.

Its subcellular location is the cytoplasm. The enzyme catalyses 3-methyl-2-oxobutanoate + (6R)-5,10-methylene-5,6,7,8-tetrahydrofolate + H2O = 2-dehydropantoate + (6S)-5,6,7,8-tetrahydrofolate. The protein operates within cofactor biosynthesis; (R)-pantothenate biosynthesis; (R)-pantoate from 3-methyl-2-oxobutanoate: step 1/2. Its function is as follows. Catalyzes the reversible reaction in which hydroxymethyl group from 5,10-methylenetetrahydrofolate is transferred onto alpha-ketoisovalerate to form ketopantoate. The polypeptide is 3-methyl-2-oxobutanoate hydroxymethyltransferase (Mycobacterium leprae (strain TN)).